The primary structure comprises 115 residues: NADH-ubiquinone oxidoreductase chain 3 (115 aa).

Helical transmembrane passes span leucine 3–tryptophan 23, phenylalanine 55–leucine 75, and leucine 86–tryptophan 106.

It belongs to the complex I subunit 3 family. In terms of assembly, core subunit of respiratory chain NADH dehydrogenase (Complex I) which is composed of 45 different subunits. Interacts with TMEM186. Interacts with TMEM242.

It localises to the mitochondrion inner membrane. The catalysed reaction is a ubiquinone + NADH + 5 H(+)(in) = a ubiquinol + NAD(+) + 4 H(+)(out). Functionally, core subunit of the mitochondrial membrane respiratory chain NADH dehydrogenase (Complex I) which catalyzes electron transfer from NADH through the respiratory chain, using ubiquinone as an electron acceptor. Essential for the catalytic activity of complex I. The protein is NADH-ubiquinone oxidoreductase chain 3 of Loxodonta africana (African elephant).